A 171-amino-acid polypeptide reads, in one-letter code: CASP-like protein 0U2 (171 aa).

The Cytoplasmic portion of the chain corresponds to 1 to 22 (MPVFGLAALKLNWEALSTPKFR). Residues 23-42 (VTFAQWVCSLLMWSLMASYS) form a helical membrane-spanning segment. The Extracellular portion of the chain corresponds to 43 to 48 (KHGEFK). A helical membrane pass occupies residues 49–69 (FVVVFGLVMWGLASTYLVYQL). At 70–77 (LNGPPLAP) the chain is on the cytoplasmic side. The helical transmembrane segment at 78 to 98 (IVEFWANVAAGSLAFICLVLA) threads the bilayer. The Extracellular portion of the chain corresponds to 99-121 (SATCNRAVGEPQTKVCSGELKPK). A helical transmembrane segment spans residues 122–142 (ASAAFAFLLLCAYGGLAYLSW). At 143 to 171 (RTWRNPPTIASYALHDDPEFAQPLHSSHK) the chain is on the cytoplasmic side.

The protein belongs to the Casparian strip membrane proteins (CASP) family. In terms of assembly, homodimer and heterodimers.

It is found in the cell membrane. The protein is CASP-like protein 0U2 of Chlorokybus atmophyticus (Soil alga).